We begin with the raw amino-acid sequence, 478 residues long: D-ribulose kinase (478 aa).

Residues 1 to 38 (MLILRQFQISSFELFQSPKQTGFYSSSRSVPLPRTRFY) constitute a chloroplast transit peptide. Substrate contacts are provided by residues Asp60, 64 to 67 (SGGR), and Asp278. Residues Ser300, Gly338, and 433–437 (GGAKN) each bind ATP.

Belongs to the FGGY kinase family. A divalent metal cation is required as a cofactor.

It localises to the plastid. It is found in the chloroplast. It catalyses the reaction D-ribulose + ATP = D-ribulose 5-phosphate + ADP + H(+). Exhibits ATP hydrolysis without substrate. Can phosphorylate D-ribulose with low efficiency. The protein is D-ribulose kinase of Arabidopsis thaliana (Mouse-ear cress).